The following is a 312-amino-acid chain: Glycine--tRNA ligase alpha subunit (312 aa).

It belongs to the class-II aminoacyl-tRNA synthetase family. In terms of assembly, tetramer of two alpha and two beta subunits.

It localises to the cytoplasm. It carries out the reaction tRNA(Gly) + glycine + ATP = glycyl-tRNA(Gly) + AMP + diphosphate. This chain is Glycine--tRNA ligase alpha subunit, found in Thiobacillus denitrificans (strain ATCC 25259 / T1).